A 452-amino-acid polypeptide reads, in one-letter code: Bifunctional protein GlmU (452 aa).

Positions 1–232 are pyrophosphorylase; it reads MTGRSCLTIV…EDEVRGINTK (232 aa). Residues 11–14, Lys25, Gln78, and 83–84 each bind UDP-N-acetyl-alpha-D-glucosamine; these read LAAG and GT. Asp108 contacts Mg(2+). UDP-N-acetyl-alpha-D-glucosamine-binding residues include Gly144, Glu158, Asn173, and Asn230. Asn230 provides a ligand contact to Mg(2+). Residues 233-253 are linker; sequence AQLAEAEQVMQARLRKEALDA. Residues 254–452 are N-acetyltransferase; sequence GVTMVAPDTV…KLLAKKPKTG (199 aa). UDP-N-acetyl-alpha-D-glucosamine is bound by residues Arg319 and Lys337. His349 acts as the Proton acceptor in catalysis. 2 residues coordinate UDP-N-acetyl-alpha-D-glucosamine: Tyr352 and Asn363. Residues Ala366, 372-373, Ser391, Ser409, and Arg426 contribute to the acetyl-CoA site; that span reads NY.

This sequence in the N-terminal section; belongs to the N-acetylglucosamine-1-phosphate uridyltransferase family. The protein in the C-terminal section; belongs to the transferase hexapeptide repeat family. As to quaternary structure, homotrimer. Mg(2+) is required as a cofactor.

The protein resides in the cytoplasm. The enzyme catalyses alpha-D-glucosamine 1-phosphate + acetyl-CoA = N-acetyl-alpha-D-glucosamine 1-phosphate + CoA + H(+). The catalysed reaction is N-acetyl-alpha-D-glucosamine 1-phosphate + UTP + H(+) = UDP-N-acetyl-alpha-D-glucosamine + diphosphate. It functions in the pathway nucleotide-sugar biosynthesis; UDP-N-acetyl-alpha-D-glucosamine biosynthesis; N-acetyl-alpha-D-glucosamine 1-phosphate from alpha-D-glucosamine 6-phosphate (route II): step 2/2. The protein operates within nucleotide-sugar biosynthesis; UDP-N-acetyl-alpha-D-glucosamine biosynthesis; UDP-N-acetyl-alpha-D-glucosamine from N-acetyl-alpha-D-glucosamine 1-phosphate: step 1/1. Its pathway is bacterial outer membrane biogenesis; LPS lipid A biosynthesis. Its function is as follows. Catalyzes the last two sequential reactions in the de novo biosynthetic pathway for UDP-N-acetylglucosamine (UDP-GlcNAc). The C-terminal domain catalyzes the transfer of acetyl group from acetyl coenzyme A to glucosamine-1-phosphate (GlcN-1-P) to produce N-acetylglucosamine-1-phosphate (GlcNAc-1-P), which is converted into UDP-GlcNAc by the transfer of uridine 5-monophosphate (from uridine 5-triphosphate), a reaction catalyzed by the N-terminal domain. The protein is Bifunctional protein GlmU of Nitrobacter hamburgensis (strain DSM 10229 / NCIMB 13809 / X14).